A 72-amino-acid polypeptide reads, in one-letter code: MALPKIAEVRKMSDEEIAAAILAAKKKLFELRLQQATRRLEKTHEFKHTRHRLGQLLTVERERQLAQSTPEA.

It belongs to the universal ribosomal protein uL29 family.

The sequence is that of Large ribosomal subunit protein uL29 from Microcystis aeruginosa (strain NIES-843 / IAM M-2473).